We begin with the raw amino-acid sequence, 146 residues long: Probable U6 snRNA-associated Sm-like protein LSm4 (146 aa).

One can recognise a Sm domain in the interval 2-75 (LPLSLLKTAQ…IKYLRVPDEV (74 aa)). The span at 80-91 (QEEAKSRTDRKP) shows a compositional bias: basic and acidic residues. Positions 80 to 146 (QEEAKSRTDR…GGRGGGRGRG (67 aa)) are disordered. Residues 137 to 146 (GGRGGGRGRG) are compositionally biased toward gly residues.

Belongs to the snRNP Sm proteins family. LSm subunits form a heteromer with a doughnut shape.

Its subcellular location is the nucleus. Its function is as follows. Binds specifically to the 3'-terminal U-tract of U6 snRNA. This is Probable U6 snRNA-associated Sm-like protein LSm4 from Nicotiana tabacum (Common tobacco).